Consider the following 437-residue polypeptide: GTPase Der (437 aa).

2 EngA-type G domains span residues 4 to 167 and 176 to 351; these read PVIA…PEDE and IRIS…ENHN. GTP is bound by residues 10–17, 57–61, 119–122, 182–189, 229–233, and 294–297; these read GRPNVGKS, DTGGI, NKID, DTAGM, and NKWD. Residues 352-436 form the KH-like domain; the sequence is LRVPTHVLND…PIKIIARKKN (85 aa).

Belongs to the TRAFAC class TrmE-Era-EngA-EngB-Septin-like GTPase superfamily. EngA (Der) GTPase family. Associates with the 50S ribosomal subunit.

Functionally, GTPase that plays an essential role in the late steps of ribosome biogenesis. In Halalkalibacterium halodurans (strain ATCC BAA-125 / DSM 18197 / FERM 7344 / JCM 9153 / C-125) (Bacillus halodurans), this protein is GTPase Der.